A 458-amino-acid polypeptide reads, in one-letter code: NADH-quinone oxidoreductase subunit N (458 aa).

13 consecutive transmembrane segments (helical) span residues 3 to 23, 29 to 49, 64 to 84, 92 to 112, 147 to 167, 188 to 208, 222 to 242, 265 to 285, 291 to 311, 320 to 340, 358 to 378, 394 to 414, and 437 to 457; these read QYLFLLPEITLFILSCLLLFL, FGLIAVLITLAATFFSQTCTS, QNVKLVILAFTCVFFIQAIAV, FSVLVLLSLLGMLLSVSSSTL, TLLGTFMSAVMIYGISLIFVV, ILLFISGLMFKVAAAPFHAWI, FFAVLPKLSLIVVLVSLISNL, NILFTSGILSIAFGTFSAFGQ, FIGFASIAHVGYMLLGVSNSA, IAYALVYSFTNLGILSVVLML, VALAFVLLLFSSAGVPPFIGF, IPTAIFSMLAGVISAFYYARI, and LLTSIVVLCALFSTFGFVLLI.

Belongs to the complex I subunit 2 family. In terms of assembly, NDH-1 is composed of 14 different subunits. Subunits NuoA, H, J, K, L, M, N constitute the membrane sector of the complex.

The protein resides in the cell inner membrane. It carries out the reaction a quinone + NADH + 5 H(+)(in) = a quinol + NAD(+) + 4 H(+)(out). In terms of biological role, NDH-1 shuttles electrons from NADH, via FMN and iron-sulfur (Fe-S) centers, to quinones in the respiratory chain. The immediate electron acceptor for the enzyme in this species is believed to be ubiquinone. Couples the redox reaction to proton translocation (for every two electrons transferred, four hydrogen ions are translocated across the cytoplasmic membrane), and thus conserves the redox energy in a proton gradient. This chain is NADH-quinone oxidoreductase subunit N, found in Neorickettsia risticii (strain Illinois).